A 280-amino-acid polypeptide reads, in one-letter code: Maltodextrin transport system permease protein MalD (280 aa).

The next 6 helical transmembrane spans lie at 15 to 35 (LTYLYLIGLSIVIIYPLLITI), 77 to 97 (LIIALITMAVQTSIIVLAGYA), 110 to 130 (LVFFLIIQMVPTMAALTAFFV), 142 to 162 (WFLIFLYVGGGIPMNAWLMKG), 200 to 220 (VQALWAFMGPFGDYILSSFLL), and 244 to 264 (IAYFSAGAILIALPICILFFF). An ABC transmembrane type-1 domain is found at 73–265 (YLNTLIIALI…LPICILFFFL (193 aa)).

It belongs to the binding-protein-dependent transport system permease family. MalFG subfamily.

The protein localises to the cell membrane. Functionally, part of the binding-protein-dependent transport system for maltodextrin; probably responsible for the translocation of the substrate across the membrane. The protein is Maltodextrin transport system permease protein MalD (malD) of Streptococcus pneumoniae (strain ATCC BAA-255 / R6).